The chain runs to 468 residues: Cysteine--tRNA ligase (468 aa).

A Zn(2+)-binding site is contributed by Cys27. Positions 29 to 39 (PTVYNYFHIGN) match the 'HIGH' region motif. Residues Cys207, His232, and Glu236 each contribute to the Zn(2+) site. A 'KMSKS' region motif is present at residues 264 to 268 (KMAKS). Lys267 contributes to the ATP binding site.

It belongs to the class-I aminoacyl-tRNA synthetase family. As to quaternary structure, monomer. Zn(2+) serves as cofactor.

The protein localises to the cytoplasm. It catalyses the reaction tRNA(Cys) + L-cysteine + ATP = L-cysteinyl-tRNA(Cys) + AMP + diphosphate. The sequence is that of Cysteine--tRNA ligase from Acetivibrio thermocellus (strain ATCC 27405 / DSM 1237 / JCM 9322 / NBRC 103400 / NCIMB 10682 / NRRL B-4536 / VPI 7372) (Clostridium thermocellum).